An 889-amino-acid polypeptide reads, in one-letter code: Low-affinity potassium transport protein (889 aa).

Over 1-51 the chain is Cytoplasmic; the sequence is MPTAKRTSSRASLALPFQLRLVHKKSWGHRLRDFISGFLKSCRPIAKYVFP. The chain crosses the membrane as a helical span at residues 52–73; sequence NFIVVHYIYLITLSIIGSILLY. The Extracellular portion of the chain corresponds to 74 to 80; it reads PCKNTAF. A helical transmembrane segment spans residues 81-101; that stretch reads IDVLFLAAGASTQGGLATKST. Residues 102-109 lie on the Cytoplasmic side of the membrane; it reads NDFNLYQQ. A helical transmembrane segment spans residues 110-130; it reads IVVYVITLLSTPILIHGFLAF. The Extracellular portion of the chain corresponds to 131–464; that stretch reads VRLYWFERYF…EYRALRLLCC (334 aa). The segment at 189 to 244 is disordered; that stretch reads REDPRQSASDVPMDSPDTSALSSISPLNVSSSKEESSDTQSSPPNFSSKRQPSDVD. The segment covering 207–219 has biased composition (low complexity); sequence SALSSISPLNVSS. 3 N-linked (GlcNAc...) asparagine glycosylation sites follow: N216, N233, and N265. A helical membrane pass occupies residues 465-487; that stretch reads ILMVYYIGFNILAFVTIVPWACT. The Cytoplasmic segment spans residues 488–499; it reads RHHYSEIIRRNG. A helical transmembrane segment spans residues 500-521; the sequence is VSPTWWGFFTAMSAFSNLGLSL. Over 522–524 the chain is Extracellular; that stretch reads TAD. Residues 525–545 form a helical membrane-spanning segment; it reads SMVSFDTAPYPLIFMMFFIII. Over 546-548 the chain is Cytoplasmic; sequence GNT. Residues 549 to 569 form a helical membrane-spanning segment; sequence GFPIMLRFIIWIMFKTSRDLS. The Extracellular segment spans residues 570-584; sequence QFKESLGFLLDHPRR. A helical transmembrane segment spans residues 585-605; the sequence is CFTLLFPSGPTWWLFTTLVVL. Residues 606–609 are Cytoplasmic-facing; it reads NATD. A helical membrane pass occupies residues 610–630; the sequence is WILFIILDFNSAVVRQVAKGY. Residues 631–657 are Extracellular-facing; the sequence is RALMGLFQSVCTRTAGFNVVDLSKLHP. The chain crosses the membrane as a helical span at residues 658–678; sequence SIQVSYMLMMYVSVLPLAISI. Residues 679–743 are Cytoplasmic-facing; the sequence is RRTNVYEEQS…KSFVGAHLRR (65 aa). The tract at residues 705-733 is disordered; sequence DDIKETDHDGESEERDTVSTKSKPKKQSP. The chain crosses the membrane as a helical span at residues 744–764; that stretch reads QLSFDLWYLFLGLFIICICEG. Residues 765 to 776 are Extracellular-facing; sequence RKIEDVNKPDFN. Residues 777-797 traverse the membrane as a helical segment; it reads VFAILFEVVSAYGTVGLSLGY. Residues 798 to 889 are Cytoplasmic-facing; sequence PNTNTSLSAQ…KIATKFWGKH (92 aa).

It belongs to the TrkH potassium transport family.

The protein localises to the membrane. Functionally, this protein is required for low-affinity potassium transport. The polypeptide is Low-affinity potassium transport protein (TRK2) (Saccharomyces cerevisiae (strain ATCC 204508 / S288c) (Baker's yeast)).